A 364-amino-acid chain; its full sequence is Methylthioribose-1-phosphate isomerase (364 aa).

Residues 49–51 (RGA), arginine 89, and glutamine 201 each bind substrate. Aspartate 242 acts as the Proton donor in catalysis. 252–253 (NK) lines the substrate pocket.

This sequence belongs to the eIF-2B alpha/beta/delta subunits family. MtnA subfamily.

The enzyme catalyses 5-(methylsulfanyl)-alpha-D-ribose 1-phosphate = 5-(methylsulfanyl)-D-ribulose 1-phosphate. It functions in the pathway amino-acid biosynthesis; L-methionine biosynthesis via salvage pathway; L-methionine from S-methyl-5-thio-alpha-D-ribose 1-phosphate: step 1/6. Catalyzes the interconversion of methylthioribose-1-phosphate (MTR-1-P) into methylthioribulose-1-phosphate (MTRu-1-P). The polypeptide is Methylthioribose-1-phosphate isomerase (Leptospira interrogans serogroup Icterohaemorrhagiae serovar copenhageni (strain Fiocruz L1-130)).